The chain runs to 293 residues: AM-toxin biosynthesis protein 14 (293 aa).

5 helical membrane passes run 33–53 (SATA…EVYI), 73–93 (IAVN…ALVL), 148–168 (GVLA…LCVW), 183–203 (LVPI…LWIL), and 221–241 (VWCL…TPLT).

It localises to the membrane. It participates in mycotoxin biosynthesis. Its function is as follows. Part of the gene clusters that mediate the biosynthesis of AM-toxins, host-selective toxins (HSTs) causing Alternaria blotch on apple, a worldwide distributed disease. AM-toxins are cyclic depsipeptides containing the 3 residues 2-hydroxy-isovaleric acid (2-HIV), dehydroalanine, L-alanine which are common for all 3 AM-toxins I to III. The fourth precursor is L-alpha-amino-methoxyphenyl-valeric acid (L-Amv) for AM-toxin I, L-alpha-amino-phenyl-valeric acid (L-Apv) for AM-toxin II, and L-alpha-amino-hydroxyphenyl-valeric acid (L-Ahv) for AM-toxin III. AM-toxins have two target sites for affecting susceptible apple cells; they cause invagination of the plasma membrane and electrolyte loss and chloroplast disorganization. The non-ribosomal peptide synthetase AMT1 contains 4 catalytic modules and is responsible for activation of each residue in AM-toxin. The aldo-keto reductase AMT2 catalyzes the conversion of 2-keto-isovaleric acid (2-KIV) to 2-hydroxy-isovaleric acid (2-HIV), one of the precursor residues incorporated by AMT1 during AM-toxin biosynthesis, by reduction of its ketone to an alcohol. The cytochrome P450 monooxygenase AMT3 and the thioesterase AMT4 are also important for AM-toxin production, but their exact function within the AM-toxin biosynthesis are not known yet. Up to 21 proteins (including AMT1 to AMT4) are predicted to be involved in AM-toxin biosynthesis since their expression ishighly up-regulated in AM-toxin-producing cultures. This chain is AM-toxin biosynthesis protein 14, found in Alternaria alternata (Alternaria rot fungus).